Reading from the N-terminus, the 549-residue chain is Glucose-6-phosphate isomerase (549 aa).

Catalysis depends on Glu355, which acts as the Proton donor. Catalysis depends on residues His386 and Lys514.

It belongs to the GPI family.

It is found in the cytoplasm. The enzyme catalyses alpha-D-glucose 6-phosphate = beta-D-fructose 6-phosphate. Its pathway is carbohydrate biosynthesis; gluconeogenesis. It participates in carbohydrate degradation; glycolysis; D-glyceraldehyde 3-phosphate and glycerone phosphate from D-glucose: step 2/4. Functionally, catalyzes the reversible isomerization of glucose-6-phosphate to fructose-6-phosphate. This is Glucose-6-phosphate isomerase from Cronobacter sakazakii (strain ATCC BAA-894) (Enterobacter sakazakii).